The chain runs to 520 residues: MSESGHSQPGLYGIERRRRWKEPGPGGPQNLSGPGGRERDYIAPWERERRDGSEETSTAVMQKTPIILSKPPAERSKQPPPPAAPAAPPAPAPLEKPIVLMKPREEGKGPAATTSTSTPEGTAPPPPAAPVPPKGEKEGQRPTQPVYQIQNRGMGTAAPAAMDPVVGQAKLLPPERMKHSIKLVDDQMNWCDSAIEYLLDQTDVLVVGVLGLQGTGKSMVMSLLSANTPEEDQRAYVFRAQSAEMKERGGNQTSGIDFFITQERIVFLDTQPILSPSILDHLINNDRKLPPEYNLPHTYVEMQSLQIAAFLFTVCHVVIVVQDWFTDLSLYRFLQTAEMVKPSTPSPSHESSSSSGSEEGAEYYPHLVFLQNKARREDFCPRKLRQMHLMIDQLMAHSHLRYKGTLSMLQCNVFPGLPPDFLDSEVNLFLMPFMDSETESETPPRAGPGSSPLFSLLPGYRGHPSFQSLVSKLRSQVMSMARPQLSHTILTEKNWFHYAARIWDGVKKSSALAEYSRLLA.

A disordered region spans residues 1–143 (MSESGHSQPG…KGEKEGQRPT (143 aa)). Ser2 is modified (N-acetylserine). Phosphoserine occurs at positions 2, 4, 7, 32, and 53. Residues 36 to 53 (GRERDYIAPWERERRDGS) are compositionally biased toward basic and acidic residues. Residues 78–94 (QPPPPAAPAAPPAPAPL) are compositionally biased toward pro residues. Residues 109–121 (GPAATTSTSTPEG) show a composition bias toward low complexity. Residues 122–133 (TAPPPPAAPVPP) are compositionally biased toward pro residues. Residue Ser451 is modified to Phosphoserine.

Belongs to the SMG9 family. In terms of assembly, self-associates to form homodimers and forms heterodimers with SMG8; these assembly forms may represent SMG1C intermediate forms. Component of the SMG1C complex composed of SMG1, SMG8 and SMG9. Self-associates to form homodimers and forms heterodimers with SMG8; these assembly forms may represent SMG1C intermediate forms. Interacts with DHX34; the interaction is RNA-independent. Phosphorylated by SMG1.

Involved in nonsense-mediated decay (NMD) of mRNAs containing premature stop codons. Is recruited by release factors to stalled ribosomes together with SMG1 and SMG8 (forming the SMG1C protein kinase complex) and, in the SMG1C complex, is required for the efficient association between SMG1 and SMG8. Plays a role in brain, heart, and eye development. This is Nonsense-mediated mRNA decay factor SMG9 from Bos taurus (Bovine).